The sequence spans 573 residues: Pyrophosphate--fructose 6-phosphate 1-phosphotransferase (573 aa).

Gly-90 is a binding site for diphosphate. Asp-184 contacts Mg(2+). Residues 212 to 214 (TID), 251 to 252 (KY), 259 to 261 (MGR), Glu-320, and 434 to 437 (YEGR) contribute to the substrate site. The Proton acceptor role is filled by Asp-214.

This sequence belongs to the phosphofructokinase type A (PFKA) family. PPi-dependent PFK group II subfamily. Clade 'Long' sub-subfamily. In terms of assembly, homodimer. Mg(2+) serves as cofactor.

It is found in the cytoplasm. It carries out the reaction beta-D-fructose 6-phosphate + diphosphate = beta-D-fructose 1,6-bisphosphate + phosphate + H(+). Its pathway is carbohydrate degradation; glycolysis; D-glyceraldehyde 3-phosphate and glycerone phosphate from D-glucose: step 3/4. With respect to regulation, non-allosteric. Catalyzes the phosphorylation of D-fructose 6-phosphate, the first committing step of glycolysis. Uses inorganic phosphate (PPi) as phosphoryl donor instead of ATP like common ATP-dependent phosphofructokinases (ATP-PFKs), which renders the reaction reversible, and can thus function both in glycolysis and gluconeogenesis. Consistently, PPi-PFK can replace the enzymes of both the forward (ATP-PFK) and reverse (fructose-bisphosphatase (FBPase)) reactions. The polypeptide is Pyrophosphate--fructose 6-phosphate 1-phosphotransferase (Treponema pallidum (strain Nichols)).